Reading from the N-terminus, the 122-residue chain is Large ribosomal subunit protein uL14 (122 aa).

Belongs to the universal ribosomal protein uL14 family. In terms of assembly, part of the 50S ribosomal subunit. Forms a cluster with proteins L3 and L19. In the 70S ribosome, L14 and L19 interact and together make contacts with the 16S rRNA in bridges B5 and B8.

Functionally, binds to 23S rRNA. Forms part of two intersubunit bridges in the 70S ribosome. In Geobacter sulfurreducens (strain ATCC 51573 / DSM 12127 / PCA), this protein is Large ribosomal subunit protein uL14.